Reading from the N-terminus, the 122-residue chain is Large ribosomal subunit protein uL14 (122 aa).

This sequence belongs to the universal ribosomal protein uL14 family. Part of the 50S ribosomal subunit. Forms a cluster with proteins L3 and L19. In the 70S ribosome, L14 and L19 interact and together make contacts with the 16S rRNA in bridges B5 and B8.

Functionally, binds to 23S rRNA. Forms part of two intersubunit bridges in the 70S ribosome. This chain is Large ribosomal subunit protein uL14, found in Chlamydia caviae (strain ATCC VR-813 / DSM 19441 / 03DC25 / GPIC) (Chlamydophila caviae).